The sequence spans 87 residues: U3-theraphotoxin-Hhn1g (87 aa).

Positions 1–24 (MVNMKASMFLTFAGLVLLFVVCFA) are cleaved as a signal peptide. The propeptide occupies 25–52 (SESEEKEFPKEMLSSIFAVDNDFKQEER). 3 cysteine pairs are disulfide-bonded: Cys54–Cys67, Cys61–Cys72, and Cys66–Cys79.

Belongs to the neurotoxin 10 (Hwtx-1) family. 51 (Hntx-8) subfamily. Hntx-8 sub-subfamily. As to expression, expressed by the venom gland.

The protein resides in the secreted. Its function is as follows. Ion channel inhibitor. The protein is U3-theraphotoxin-Hhn1g of Cyriopagopus hainanus (Chinese bird spider).